The chain runs to 408 residues: BRCA1-A complex subunit Abraxas 1 (408 aa).

An MPN domain is found at 7–155 (TAVISGFVFG…KSTHRLEYAL (149 aa)). A coiled-coil region spans residues 210–272 (ALAEVNRISD…MEEKGNKVSE (63 aa)). The segment at 335–408 (HRRQAGKRKA…EVSRSKSPTF (74 aa)) is disordered. Positions 337 to 358 (RQAGKRKAHSKQLGKTSTKKSR) are enriched in basic residues. The segment covering 394–408 (QSLNVEVSRSKSPTF) has biased composition (polar residues). Phosphoserine is present on S405. The short motif at 405-408 (SPTF) is the pSXXF motif element.

It belongs to the FAM175 family. Abraxas subfamily. Component of the BRCA1-A complex. Component of the BRISC complex. Homodimer. Interacts directly (when phosphorylated at Ser-405) with brca1. The phosphorylated homodimer can interact directly with two brca1 chains, giving rise to a heterotetramer. Phosphorylation of Ser-405 of the pSXXF motif by ATM or ATR constitutes a specific recognition motif for the BRCT domain of BRCA1.

Its subcellular location is the nucleus. Functionally, involved in DNA damage response and double-strand break (DSB) repair. Component of the BRCA1-A complex, acting as a central scaffold protein that assembles the various components of the complex and mediates the recruitment of brca1. The BRCA1-A complex specifically recognizes 'Lys-63'-linked ubiquitinated histones H2A and H2AX at DNA lesion sites, leading to target the brca1-bard1 heterodimer to sites of DNA damage at DSBs. This complex also possesses deubiquitinase activity that specifically removes 'Lys-63'-linked ubiquitin on histones H2A and H2AX. The protein is BRCA1-A complex subunit Abraxas 1 of Xenopus laevis (African clawed frog).